A 328-amino-acid polypeptide reads, in one-letter code: Lipoyl synthase (328 aa).

Positions 56, 61, 67, 82, 86, 89, and 298 each coordinate [4Fe-4S] cluster. One can recognise a Radical SAM core domain in the interval 68–287 (WEDREATFLI…KEEAEEIGFS (220 aa)).

The protein belongs to the radical SAM superfamily. Lipoyl synthase family. [4Fe-4S] cluster is required as a cofactor.

The protein localises to the cytoplasm. The catalysed reaction is [[Fe-S] cluster scaffold protein carrying a second [4Fe-4S](2+) cluster] + N(6)-octanoyl-L-lysyl-[protein] + 2 oxidized [2Fe-2S]-[ferredoxin] + 2 S-adenosyl-L-methionine + 4 H(+) = [[Fe-S] cluster scaffold protein] + N(6)-[(R)-dihydrolipoyl]-L-lysyl-[protein] + 4 Fe(3+) + 2 hydrogen sulfide + 2 5'-deoxyadenosine + 2 L-methionine + 2 reduced [2Fe-2S]-[ferredoxin]. The protein operates within protein modification; protein lipoylation via endogenous pathway; protein N(6)-(lipoyl)lysine from octanoyl-[acyl-carrier-protein]: step 2/2. Its function is as follows. Catalyzes the radical-mediated insertion of two sulfur atoms into the C-6 and C-8 positions of the octanoyl moiety bound to the lipoyl domains of lipoate-dependent enzymes, thereby converting the octanoylated domains into lipoylated derivatives. The chain is Lipoyl synthase from Streptomyces avermitilis (strain ATCC 31267 / DSM 46492 / JCM 5070 / NBRC 14893 / NCIMB 12804 / NRRL 8165 / MA-4680).